We begin with the raw amino-acid sequence, 275 residues long: Nurim (275 aa).

At M1–V4 the chain is on the nuclear side. Residues T5–F32 traverse the membrane as a helical segment. Topologically, residues V33 to V63 are perinuclear space. The helical transmembrane segment at V64–L85 threads the bilayer. The Nuclear portion of the chain corresponds to A86–S102. The helical transmembrane segment at R103–H119 threads the bilayer. Residues Y120–W138 lie on the Perinuclear space side of the membrane. The helical transmembrane segment at E139–L169 threads the bilayer. The Nuclear segment spans residues L170–L196. A helical membrane pass occupies residues Y197–L215. Over P216 to D221 the chain is Perinuclear space. The helical transmembrane segment at R222 to L239 threads the bilayer. Topologically, residues D240 to E275 are nuclear.

This sequence belongs to the nurim family.

The protein localises to the nucleus inner membrane. The chain is Nurim (nrm) from Danio rerio (Zebrafish).